Reading from the N-terminus, the 475-residue chain is Deoxyguanosinetriphosphate triphosphohydrolase-like protein (475 aa).

The region spanning 118-272 (RLTHTLEVAQ…MDLSDDIAYS (155 aa)) is the HD domain.

This sequence belongs to the dGTPase family. Type 2 subfamily.

This Bifidobacterium longum (strain NCC 2705) protein is Deoxyguanosinetriphosphate triphosphohydrolase-like protein (dgt).